A 381-amino-acid polypeptide reads, in one-letter code: DNA replication and repair protein RecF (381 aa).

30 to 37 (GENAQGKT) serves as a coordination point for ATP.

The protein belongs to the RecF family.

The protein resides in the cytoplasm. In terms of biological role, the RecF protein is involved in DNA metabolism; it is required for DNA replication and normal SOS inducibility. RecF binds preferentially to single-stranded, linear DNA. It also seems to bind ATP. This chain is DNA replication and repair protein RecF, found in Lactobacillus delbrueckii subsp. bulgaricus (strain ATCC BAA-365 / Lb-18).